The following is a 451-amino-acid chain: UDP-N-acetylmuramoylalanine--D-glutamate ligase (451 aa).

120-126 contacts ATP; that stretch reads GSNGKTT.

It belongs to the MurCDEF family.

The protein resides in the cytoplasm. It catalyses the reaction UDP-N-acetyl-alpha-D-muramoyl-L-alanine + D-glutamate + ATP = UDP-N-acetyl-alpha-D-muramoyl-L-alanyl-D-glutamate + ADP + phosphate + H(+). It participates in cell wall biogenesis; peptidoglycan biosynthesis. In terms of biological role, cell wall formation. Catalyzes the addition of glutamate to the nucleotide precursor UDP-N-acetylmuramoyl-L-alanine (UMA). The chain is UDP-N-acetylmuramoylalanine--D-glutamate ligase from Bacillus velezensis (strain DSM 23117 / BGSC 10A6 / LMG 26770 / FZB42) (Bacillus amyloliquefaciens subsp. plantarum).